Reading from the N-terminus, the 424-residue chain is UPF0229 protein PputGB1_0427 (424 aa).

Residues 81 to 107 (EFTAGEHIPRPQGGGGGGGGRGKAGNS) are disordered. A compositionally biased stretch (gly residues) spans 92-107 (QGGGGGGGGRGKAGNS).

This sequence belongs to the UPF0229 family.

The protein is UPF0229 protein PputGB1_0427 of Pseudomonas putida (strain GB-1).